The following is a 375-amino-acid chain: Erythronate-4-phosphate dehydrogenase (375 aa).

Residues Ser-45 and Thr-67 each coordinate substrate. An NAD(+)-binding site is contributed by Asp-147. Arg-209 is an active-site residue. Position 233 (Asp-233) interacts with NAD(+). Glu-238 is an active-site residue. The Proton donor role is filled by His-255. NAD(+) is bound at residue Gly-258. Tyr-259 lines the substrate pocket.

It belongs to the D-isomer specific 2-hydroxyacid dehydrogenase family. PdxB subfamily. In terms of assembly, homodimer.

The protein resides in the cytoplasm. It carries out the reaction 4-phospho-D-erythronate + NAD(+) = (R)-3-hydroxy-2-oxo-4-phosphooxybutanoate + NADH + H(+). It participates in cofactor biosynthesis; pyridoxine 5'-phosphate biosynthesis; pyridoxine 5'-phosphate from D-erythrose 4-phosphate: step 2/5. In terms of biological role, catalyzes the oxidation of erythronate-4-phosphate to 3-hydroxy-2-oxo-4-phosphonooxybutanoate. The protein is Erythronate-4-phosphate dehydrogenase of Shewanella amazonensis (strain ATCC BAA-1098 / SB2B).